Reading from the N-terminus, the 693-residue chain is Glycine--tRNA ligase beta subunit (693 aa).

This sequence belongs to the class-II aminoacyl-tRNA synthetase family. As to quaternary structure, tetramer of two alpha and two beta subunits.

It is found in the cytoplasm. The enzyme catalyses tRNA(Gly) + glycine + ATP = glycyl-tRNA(Gly) + AMP + diphosphate. This is Glycine--tRNA ligase beta subunit from Vibrio campbellii (strain ATCC BAA-1116).